A 554-amino-acid chain; its full sequence is DNA ligase (554 aa).

Position 253 (glutamate 253) interacts with ATP. Catalysis depends on lysine 255, which acts as the N6-AMP-lysine intermediate. ATP-binding residues include arginine 260, arginine 275, glutamate 304, phenylalanine 344, arginine 418, and lysine 424.

The protein belongs to the ATP-dependent DNA ligase family. The cofactor is Mg(2+).

It carries out the reaction ATP + (deoxyribonucleotide)n-3'-hydroxyl + 5'-phospho-(deoxyribonucleotide)m = (deoxyribonucleotide)n+m + AMP + diphosphate.. Functionally, DNA ligase that seals nicks in double-stranded DNA during DNA replication, DNA recombination and DNA repair. This chain is DNA ligase, found in Haloarcula marismortui (strain ATCC 43049 / DSM 3752 / JCM 8966 / VKM B-1809) (Halobacterium marismortui).